The chain runs to 206 residues: Ribosomal RNA small subunit methyltransferase G (206 aa).

Residues G73, L78, 124–125 (VE), and R139 contribute to the S-adenosyl-L-methionine site.

This sequence belongs to the methyltransferase superfamily. RNA methyltransferase RsmG family.

It is found in the cytoplasm. The catalysed reaction is guanosine(527) in 16S rRNA + S-adenosyl-L-methionine = N(7)-methylguanosine(527) in 16S rRNA + S-adenosyl-L-homocysteine. Specifically methylates the N7 position of guanine in position 527 of 16S rRNA. This chain is Ribosomal RNA small subunit methyltransferase G, found in Photobacterium profundum (strain SS9).